Reading from the N-terminus, the 130-residue chain is Anti-adapter protein IraD (130 aa).

Belongs to the GpW/Gp25 family. IraD subfamily. In terms of assembly, interacts with RssB.

The protein localises to the cytoplasm. Inhibits RpoS proteolysis by regulating RssB activity, thereby increasing the stability of the sigma stress factor RpoS during oxidative stress. Its effect on RpoS stability is due to its interaction with RssB, which probably blocks the interaction of RssB with RpoS, and the consequent delivery of the RssB-RpoS complex to the ClpXP protein degradation pathway. This chain is Anti-adapter protein IraD, found in Escherichia coli (strain K12 / MC4100 / BW2952).